The sequence spans 571 residues: MPTISRQEYVGLFGPTTGDKIRLGDTNLFIEIEKDLRGYGDESVYGGGKSLRDGMGADNRMTSENILDLVITSVTILDARQGVIKADVGIKGGRIVGIGKSGNPNMMNGVTPGMVVGVSTDAISGEHLILTAAGIDTHIHFISPQQVEHALSNGVTTFFGGGVGPTDGTNGTTVTAGPWHIHRMLRAFESLPVNVGILGKGHAAVAMPLVEQIKAGVAGLKVHEDWGATNSALRNALRVADEMDIQVAVHTDSLNEGGYVEDTIDAFEGRTIHTFHTEGAGGGHAPDIIKVASQMNVLPSSTNPTLPYGINSQAELFDMIMVCHNLNPKVPADVAFSESRVRPETIAAENVLHDMGVLSMFSSDSQAMGRVGENWLRVMQTAHAMKAARGKLPEDAAHNDNFRVLRYVAKITINPAIAQGISHVLGSVEVGKMADLVLWEPRFFGVKPKLVIKGGMINWAVMGDPNASLPTPQPTFYRPMFGALGKTLQETCVTFVSQAAMELGVKESLGLERQVMAVHNCRAISKKDMVRNAETPTIEVDAETFAVRVNGEYATVKPVRTVALNQRYFFS.

Residues 133 to 571 (AGIDTHIHFI…VALNQRYFFS (439 aa)) form the Urease domain. His138, His140, and Lys221 together coordinate Ni(2+). Lys221 carries the post-translational modification N6-carboxylysine. His223 is a binding site for substrate. Ni(2+)-binding residues include His250 and His276. His324 acts as the Proton donor in catalysis. Residue Asp364 participates in Ni(2+) binding.

Belongs to the metallo-dependent hydrolases superfamily. Urease alpha subunit family. Heterotrimer of UreA (gamma), UreB (beta) and UreC (alpha) subunits. Three heterotrimers associate to form the active enzyme. It depends on Ni cation as a cofactor. In terms of processing, carboxylation allows a single lysine to coordinate two nickel ions.

The protein localises to the cytoplasm. It catalyses the reaction urea + 2 H2O + H(+) = hydrogencarbonate + 2 NH4(+). It functions in the pathway nitrogen metabolism; urea degradation; CO(2) and NH(3) from urea (urease route): step 1/1. The chain is Urease subunit alpha from Photorhabdus laumondii subsp. laumondii (strain DSM 15139 / CIP 105565 / TT01) (Photorhabdus luminescens subsp. laumondii).